We begin with the raw amino-acid sequence, 328 residues long: tRNA uridine(34) hydroxylase (328 aa).

Positions Leu-130–Glu-224 constitute a Rhodanese domain. Catalysis depends on Cys-184, which acts as the Cysteine persulfide intermediate.

The protein belongs to the TrhO family.

The catalysed reaction is uridine(34) in tRNA + AH2 + O2 = 5-hydroxyuridine(34) in tRNA + A + H2O. In terms of biological role, catalyzes oxygen-dependent 5-hydroxyuridine (ho5U) modification at position 34 in tRNAs. This Streptococcus pyogenes serotype M3 (strain SSI-1) protein is tRNA uridine(34) hydroxylase.